Consider the following 859-residue polypeptide: Auxin response factor 2 (859 aa).

The disordered stretch occupies residues 1 to 48; sequence MASSEVSMKGNRGGDNFSSSGFSDPKETRNVSVAGEGQKSNSTRSAAA. Residues 14–23 are compositionally biased toward low complexity; sequence GDNFSSSGFS. The TF-B3 DNA-binding region spans 164-266; that stretch reads FCKTLTASDT…ELRVGVRRAM (103 aa). A compositionally biased stretch (pro residues) spans 396–407; it reads LAPPALSPVPMP. Disordered regions lie at residues 396–442, 687–736, and 829–859; these read LAPP…LPAS, IASP…RSCT, and RSEE…AGNS. Composition is skewed to polar residues over residues 416–426 and 695–704; these read IAPSSPDSSML and LSDQSKGSKS. Residues 733–817 form the PB1 domain; sequence RSCTKVHKQG…RKIFIYTKEE (85 aa). Over residues 847–859 the composition is skewed to polar residues; it reads SASNPSLSSAGNS.

It belongs to the ARF family. As to quaternary structure, homodimers and heterodimers. Interacts with ARF1. Expressed in the whole plant.

Its subcellular location is the nucleus. Functionally, auxin response factors (ARFs) are transcriptional factors that bind specifically to the DNA sequence 5'-TGTCTC-3' found in the auxin-responsive promoter elements (AuxREs). Could act as transcriptional activator or repressor. Formation of heterodimers with Aux/IAA proteins may alter their ability to modulate early auxin response genes expression. Promotes flowering, stamen development, floral organ abscission and fruit dehiscence. Functions independently of ethylene and cytokinin response pathways. May act as a repressor of cell division and organ growth. The protein is Auxin response factor 2 (ARF2) of Arabidopsis thaliana (Mouse-ear cress).